Consider the following 136-residue polypeptide: Cytidine deaminase (136 aa).

Residues 1–128 (MDVEKLIAES…KLLPGAFSKE (128 aa)) form the CMP/dCMP-type deaminase domain. 42-44 (NIE) provides a ligand contact to substrate. C53 lines the Zn(2+) pocket. The active-site Proton donor is the E55. Positions 86 and 89 each coordinate Zn(2+).

The protein belongs to the cytidine and deoxycytidylate deaminase family. It depends on Zn(2+) as a cofactor.

It catalyses the reaction cytidine + H2O + H(+) = uridine + NH4(+). The enzyme catalyses 2'-deoxycytidine + H2O + H(+) = 2'-deoxyuridine + NH4(+). In terms of biological role, this enzyme scavenges exogenous and endogenous cytidine and 2'-deoxycytidine for UMP synthesis. In Sporosarcina psychrophila (Bacillus psychrophilus), this protein is Cytidine deaminase (cdd).